We begin with the raw amino-acid sequence, 343 residues long: Cytoplasmic tRNA 2-thiolation protein 1 (343 aa).

The protein belongs to the TtcA family. CTU1/NCS6/ATPBD3 subfamily.

The protein localises to the cytoplasm. Its pathway is tRNA modification; 5-methoxycarbonylmethyl-2-thiouridine-tRNA biosynthesis. Plays a central role in 2-thiolation of mcm(5)S(2)U at tRNA wobble positions of tRNA(Lys), tRNA(Glu) and tRNA(Gln). Directly binds tRNAs and probably acts by catalyzing adenylation of tRNAs, an intermediate required for 2-thiolation. It is unclear whether it acts as a sulfurtransferase that transfers sulfur from thiocarboxylated URM1 onto the uridine of tRNAs at wobble position. This chain is Cytoplasmic tRNA 2-thiolation protein 1, found in Drosophila melanogaster (Fruit fly).